The sequence spans 533 residues: Sterol 26-hydroxylase, mitochondrial (533 aa).

Residues 1-32 (MAAWSRTRLRWTLLDPRVVGRGLCPQGARAKA) constitute a mitochondrion transit peptide. The disordered stretch occupies residues 34–60 (IPAALQAQESTEGPGTGQDRPRLRSPA). Residues Lys-142, Lys-232, Lys-285, Lys-296, and Lys-375 each carry the N6-acetyllysine modification. The interval 386 to 400 (PLLKAVIKETLRLYP) is sterol-binding. Cys-479 is a binding site for heme. N6-acetyllysine occurs at positions 512 and 523.

This sequence belongs to the cytochrome P450 family. As to quaternary structure, interacts with HSP70; this interaction is required for initial targeting to mitochondria. Requires heme as cofactor. Post-translationally, acetylation of Lys-125 and Lys-285 is observed in liver mitochondria from fasted mice but not from fed mice. In terms of tissue distribution, expressed in the gray and white matter of cerebellum (at protein level).

The protein resides in the mitochondrion inner membrane. The enzyme catalyses 5beta-cholestane-3alpha,7alpha,12alpha-triol + 6 reduced [adrenodoxin] + 3 O2 + 5 H(+) = (25R)-3alpha,7alpha,12alpha-trihydroxy-5beta-cholestan-26-oate + 6 oxidized [adrenodoxin] + 4 H2O. It catalyses the reaction cholestanol + 2 reduced [adrenodoxin] + O2 + 2 H(+) = (25R)-26-hydroxycholestanol + 2 oxidized [adrenodoxin] + H2O. The catalysed reaction is (25R)-3beta-hydroxycholest-5-en-7-one-26-al + 2 reduced [adrenodoxin] + O2 + H(+) = (25R)-3beta-hydroxycholest-5-en-7-one-26-oate + 2 oxidized [adrenodoxin] + H2O. It carries out the reaction (25R)-3beta,26-dihydroxycholest-5-en-7-one + 2 reduced [adrenodoxin] + O2 + 2 H(+) = (25R)-3beta-hydroxycholest-5-en-7-one-26-al + 2 oxidized [adrenodoxin] + 2 H2O. The enzyme catalyses 7-oxocholesterol + 2 reduced [adrenodoxin] + O2 + 2 H(+) = (25R)-3beta,26-dihydroxycholest-5-en-7-one + 2 oxidized [adrenodoxin] + H2O. It catalyses the reaction calciol + 2 reduced [adrenodoxin] + O2 + 2 H(+) = calcidiol + 2 oxidized [adrenodoxin] + H2O. The catalysed reaction is (25R)-5beta-cholestane-3alpha,7alpha,12alpha,26-tetrol + 2 reduced [adrenodoxin] + O2 + 2 H(+) = (25R)-3alpha,7alpha,12alpha-trihydroxy-5beta-cholestan-26-al + 2 oxidized [adrenodoxin] + 2 H2O. It carries out the reaction 2 reduced [adrenodoxin] + cholesterol + O2 + 2 H(+) = (25R)-cholest-5-ene-3beta,26-diol + 2 oxidized [adrenodoxin] + H2O. The enzyme catalyses (25R)-3beta,4beta-dihydroxycholest-5-en-26-al + 2 reduced [adrenodoxin] + O2 + H(+) = (25R)-3beta,4beta-dihydroxycholest-5-en-26-oate + 2 oxidized [adrenodoxin] + H2O. It catalyses the reaction (25R)-4beta,26-dihydroxycholesterol + 2 reduced [adrenodoxin] + O2 + 2 H(+) = (25R)-3beta,4beta-dihydroxycholest-5-en-26-al + 2 oxidized [adrenodoxin] + 2 H2O. The catalysed reaction is 4beta-hydroxycholesterol + 2 reduced [adrenodoxin] + O2 + 2 H(+) = (25R)-4beta,26-dihydroxycholesterol + 2 oxidized [adrenodoxin] + H2O. It carries out the reaction (25R)-3beta-hydroxy-5-cholesten-26-al + 2 reduced [adrenodoxin] + O2 + H(+) = (25R)-3beta-hydroxy-5-cholestenoate + 2 oxidized [adrenodoxin] + H2O. The enzyme catalyses (25R)-cholest-5-ene-3beta,26-diol + 2 reduced [adrenodoxin] + O2 + 2 H(+) = (25R)-3beta-hydroxy-5-cholesten-26-al + 2 oxidized [adrenodoxin] + 2 H2O. It catalyses the reaction (25R)-3alpha,7alpha,12alpha-trihydroxy-5beta-cholestan-26-al + 2 reduced [adrenodoxin] + O2 + H(+) = (25R)-3alpha,7alpha,12alpha-trihydroxy-5beta-cholestan-26-oate + 2 oxidized [adrenodoxin] + H2O. The catalysed reaction is 5beta-cholestane-3alpha,7alpha,12alpha-triol + 2 reduced [adrenodoxin] + O2 + 2 H(+) = (25R)-5beta-cholestane-3alpha,7alpha,12alpha,26-tetrol + 2 oxidized [adrenodoxin] + H2O. The protein operates within hormone biosynthesis; cholecalciferol biosynthesis. Its pathway is steroid metabolism; cholesterol degradation. It functions in the pathway lipid metabolism; bile acid biosynthesis. Functionally, cytochrome P450 monooxygenase that catalyzes regio- and stereospecific hydroxylation of cholesterol and its derivatives. Hydroxylates (with R stereochemistry) the terminal methyl group of cholesterol side-chain in a three step reaction to yield at first a C26 alcohol, then a C26 aldehyde and finally a C26 acid. Regulates cholesterol homeostasis by catalyzing the conversion of excess cholesterol to bile acids via both the 'neutral' (classic) and the 'acid' (alternative) pathways. May also regulate cholesterol homeostasis via generation of active oxysterols, which act as ligands for NR1H2 and NR1H3 nuclear receptors, modulating the transcription of genes involved in lipid metabolism. Plays a role in cholestanol metabolism in the cerebellum. Similarly to cholesterol, hydroxylates cholestanol and may facilitate sterol diffusion through the blood-brain barrier to the systemic circulation for further degradation. Also hydroxylates retinal 7-ketocholesterol, a noxious oxysterol with pro-inflammatory and pro-apoptotic effects, and may play a role in its elimination from the retinal pigment epithelium. May play a redundant role in vitamin D biosynthesis. Catalyzes 25-hydroxylation of vitamin D3 that is required for its conversion to a functionally active form. This chain is Sterol 26-hydroxylase, mitochondrial, found in Mus musculus (Mouse).